Consider the following 189-residue polypeptide: Peptidyl-tRNA hydrolase (189 aa).

Phenylalanine 15 is a tRNA binding site. The active-site Proton acceptor is histidine 20. TRNA-binding residues include tyrosine 65, asparagine 67, and asparagine 113.

It belongs to the PTH family. Monomer.

The protein resides in the cytoplasm. It carries out the reaction an N-acyl-L-alpha-aminoacyl-tRNA + H2O = an N-acyl-L-amino acid + a tRNA + H(+). Its function is as follows. Hydrolyzes ribosome-free peptidyl-tRNAs (with 1 or more amino acids incorporated), which drop off the ribosome during protein synthesis, or as a result of ribosome stalling. Catalyzes the release of premature peptidyl moieties from peptidyl-tRNA molecules trapped in stalled 50S ribosomal subunits, and thus maintains levels of free tRNAs and 50S ribosomes. The sequence is that of Peptidyl-tRNA hydrolase from Phytoplasma australiense.